Consider the following 448-residue polypeptide: Alpha-2B adrenergic receptor (448 aa).

Residues M1–T12 lie on the Extracellular side of the membrane. Residues A13–L38 form a helical membrane-spanning segment. Residues T39–L49 are Cytoplasmic-facing. Residues F50–L75 traverse the membrane as a helical segment. At G76–C85 the chain is on the extracellular side. C85 and C163 are joined by a disulfide. The chain crosses the membrane as a helical span at residues E86–L108. Residues D109–K130 lie on the Cytoplasmic side of the membrane. Residues C131–D153 form a helical membrane-spanning segment. Topologically, residues Q154–E168 are extracellular. Residues A169–L192 traverse the membrane as a helical segment. At R193–V370 the chain is on the cytoplasmic side. A disordered region spans residues R203 to Q326. Residues A293 to E309 are compositionally biased toward acidic residues. A helical membrane pass occupies residues L371–I394. The Extracellular segment spans residues C395 to H403. A helical transmembrane segment spans residues G404 to F427. Over N428 to W448 the chain is Cytoplasmic. C440 carries S-palmitoyl cysteine lipidation.

It belongs to the G-protein coupled receptor 1 family. Adrenergic receptor subfamily. ADRA2B sub-subfamily. Interacts with RAB26. Interacts with PPP1R9B.

The protein resides in the cell membrane. Its function is as follows. Alpha-2 adrenergic receptors mediate the catecholamine-induced inhibition of adenylate cyclase through the action of G proteins. This Cavia porcellus (Guinea pig) protein is Alpha-2B adrenergic receptor (ADRA2B).